Here is a 989-residue protein sequence, read N- to C-terminus: SWI/SNF-related matrix-associated actin-dependent regulator of chromatin subfamily A containing DEAD/H box 1 homolog (989 aa).

The segment at 1-288 (MSTTSDFQTG…RRAKRGETKN (288 aa)) is disordered. Residues 72 to 105 (DDDDEDYVDETMPSEDEEDFDNNEEDEDDDDYEE) are compositionally biased toward acidic residues. The span at 109–120 (RKRKAPSKKKLV) shows a compositional bias: basic residues. Basic and acidic residues predominate over residues 124–140 (ENYRREDSETPEPEMKR). The span at 187–200 (DDESEDDFINDEEI) shows a compositional bias: acidic residues. Composition is skewed to basic and acidic residues over residues 201–221 (SEKGSGKGSEKEESEGSGKDS) and 241–250 (AQKEQKKKAE). Residues 251–276 (SDEDWEEDEDDMNADGDETPSDDSDI) are compositionally biased toward acidic residues. Over residues 277-288 (EERRAKRGETKN) the composition is skewed to basic and acidic residues. Residues 406 to 574 (IMMYNKDLNA…ISLMYFVLSK (169 aa)) enclose the Helicase ATP-binding domain. 419-426 (DEMGLGKT) serves as a coordination point for ATP. The short motif at 525 to 528 (DEGH) is the DEGH box element. In terms of domain architecture, Helicase C-terminal spans 757 to 912 (QLDVMLPEIQ…GVKGQLDEDA (156 aa)). The segment at 941–989 (RYDDVEDDSGDSKNGIDAEEAAKKEDEAVKEPVEKEQQKEEESQPSTSA) is disordered. Basic and acidic residues predominate over residues 950–982 (GDSKNGIDAEEAAKKEDEAVKEPVEKEQQKEEE).

It belongs to the SNF2/RAD54 helicase family.

Its subcellular location is the nucleus. The protein localises to the chromosome. It carries out the reaction ATP + H2O = ADP + phosphate + H(+). Functionally, DNA helicase that possesses intrinsic ATP-dependent nucleosome-remodeling activity and is both required for DNA repair and heterochromatin organization. Promotes DNA end resection of double-strand breaks (DSBs) following DNA damage: probably acts by weakening histone DNA interactions in nucleosomes flanking DSBs. This is SWI/SNF-related matrix-associated actin-dependent regulator of chromatin subfamily A containing DEAD/H box 1 homolog from Caenorhabditis elegans.